The following is a 539-amino-acid chain: Chaperonin GroEL (539 aa).

Residues 29–32 (TLGP), 86–90 (DGTTT), glycine 413, 476–478 (NAA), and aspartate 492 contribute to the ATP site.

Belongs to the chaperonin (HSP60) family. In terms of assembly, forms a cylinder of 14 subunits composed of two heptameric rings stacked back-to-back. Interacts with the co-chaperonin GroES.

It is found in the cytoplasm. The catalysed reaction is ATP + H2O + a folded polypeptide = ADP + phosphate + an unfolded polypeptide.. Functionally, together with its co-chaperonin GroES, plays an essential role in assisting protein folding. The GroEL-GroES system forms a nano-cage that allows encapsulation of the non-native substrate proteins and provides a physical environment optimized to promote and accelerate protein folding. The polypeptide is Chaperonin GroEL (Macrococcus caseolyticus (strain JCSC5402) (Macrococcoides caseolyticum)).